Consider the following 237-residue polypeptide: Phosphoserine phosphatase (237 aa).

Aspartate 39 (nucleophile) is an active-site residue. Residues aspartate 39 and glutamate 41 each coordinate Mg(2+). The active-site Proton donor is the glutamate 41. Residues glutamate 47, arginine 78, 122-123 (SD), and lysine 165 each bind substrate. Aspartate 184 serves as a coordination point for Mg(2+). Substrate is bound at residue asparagine 187.

It belongs to the thrH family. The cofactor is Mg(2+).

The enzyme catalyses O-phospho-L-serine + H2O = L-serine + phosphate. It carries out the reaction O-phospho-D-serine + H2O = D-serine + phosphate. Its pathway is amino-acid biosynthesis; L-serine biosynthesis; L-serine from 3-phospho-D-glycerate: step 3/3. Its function is as follows. Phosphoserine phosphatase that mediates dephosphorylation of phosphoserine in the serine biosynthesis pathway. Also able to dephosphorylate phospho-threonine. This chain is Phosphoserine phosphatase, found in Pseudomonas syringae pv. tomato (strain ATCC BAA-871 / DC3000).